Consider the following 249-residue polypeptide: tRNA(Phe) (4-demethylwyosine(37)-C(7)) aminocarboxypropyltransferase (249 aa).

S-adenosyl-L-methionine contacts are provided by residues Ser80, Arg87, Glu127, and Asp154–Asn155.

This sequence belongs to the class I-like SAM-binding methyltransferase superfamily. TRM5/TYW2 family.

Its subcellular location is the cytoplasm. It carries out the reaction 4-demethylwyosine(37) in tRNA(Phe) + S-adenosyl-L-methionine = 4-demethyl-7-[(3S)-3-amino-3-carboxypropyl]wyosine(37) in tRNA(Phe) + S-methyl-5'-thioadenosine + H(+). S-adenosyl-L-methionine-dependent transferase that acts as a component of the wyosine derivatives biosynthesis pathway. Catalyzes the transfer of the alpha-amino-alpha-carboxypropyl (acp) group from S-adenosyl-L-methionine to 4-demethylwyosine (imG-14), forming 7-aminocarboxypropyl-demethylwyosine (wybutosine-86) at position 37 of tRNA(Phe). This is tRNA(Phe) (4-demethylwyosine(37)-C(7)) aminocarboxypropyltransferase from Methanocaldococcus jannaschii (strain ATCC 43067 / DSM 2661 / JAL-1 / JCM 10045 / NBRC 100440) (Methanococcus jannaschii).